The sequence spans 717 residues: MKFGKRHYRPQVDQMDCGVASLAMVFGYYGSYYFLAHLRELAKTTMDGTTALGLVKVAEEIGFETRAIKADMTLFDLPDLTFPFVAHVLKEGKLLHYYVVTGQDKDSIHIADPDPGVKLTKLPRERFEEEWTGVTLFMAPSPDYKPHKEQKNGLLSFIPILVKQRGLIANIVLATLLVTVINIVGSYYLQSIIDTYVPDQMRSTLGIISIGLVIVYILQQILSYAQEYLLLVLGQRLSIDVILSYIKHVFHLPMSFFATRRTGEIVSRFTDANSIIDALASTILSIFLDVSTVVIISLVLFSQNTNLFFMTLLALPIYTVIIFAFMKPFEKMNRDTMEANAVLSSSIIEDINGIETIKSLTSESQRYQKIDKEFVDYLKKSFTYSRAESQQKALKKVAHLLLNVGILWMGAVLVMDGKMSLGQLITYNTLLVYFTNPLENIINLQTKLQTAQVANNRLNEVYLVASEFEEKKTVEDLSLMKGDMTFKQVHYKYGYGRDVLSDINLTVPQGSKVAFVGISGSGKTTLAKMMVNFYDPSQGEISLGGVNLNQIDKKALRQYINYLPQQPYVFNGTILENLLLGAKEGTTQEDILRAVELAEIREDIERMPLNYQTELTSDGAGISGGQRQRIALARALLTDAPVLILDEATSSLDILTEKRIVDNLIALDKTLIFIAHRLTIAERTEKVVVLDQGKIVEEGKHADLLAQGGFYAHLVNS.

One can recognise a Peptidase C39 domain in the interval 11 to 138 (QVDQMDCGVA…EEWTGVTLFM (128 aa)). Cysteine 17 is an active-site residue. A run of 7 helical transmembrane segments spans residues 18 to 38 (GVAS…LAHL), 166 to 186 (GLIA…IVGS), 205 to 225 (LGII…LSYA), 237 to 257 (LSID…MSFF), 281 to 301 (STIL…LVLF), 306 to 326 (NLFF…FAFM), and 397 to 417 (VAHL…VMDG). The ABC transmembrane type-1 domain maps to 168 to 450 (IANIVLATLL…IINLQTKLQT (283 aa)). The 234-residue stretch at 484–717 (MTFKQVHYKY…GGFYAHLVNS (234 aa)) folds into the ABC transporter domain. ATP is bound at residue 517-524 (GISGSGKT).

Belongs to the ABC transporter superfamily. HlyB family.

Its subcellular location is the cell membrane. Required for induction of competence. Seems to transport the competence-stimulating peptide (CSP). The protein is Transport/processing ATP-binding protein ComA (comA) of Streptococcus pneumoniae (strain ATCC BAA-255 / R6).